The following is a 344-amino-acid chain: Phenylalanine--tRNA ligase alpha subunit (344 aa).

Glutamate 256 is a Mg(2+) binding site.

This sequence belongs to the class-II aminoacyl-tRNA synthetase family. Phe-tRNA synthetase alpha subunit type 1 subfamily. Tetramer of two alpha and two beta subunits. The cofactor is Mg(2+).

The protein localises to the cytoplasm. The enzyme catalyses tRNA(Phe) + L-phenylalanine + ATP = L-phenylalanyl-tRNA(Phe) + AMP + diphosphate + H(+). This is Phenylalanine--tRNA ligase alpha subunit from Geobacillus thermodenitrificans (strain NG80-2).